A 248-amino-acid polypeptide reads, in one-letter code: tRNA (guanine-N(1)-)-methyltransferase (248 aa).

S-adenosyl-L-methionine is bound by residues glycine 113 and 133-138 (VGDYVL).

It belongs to the RNA methyltransferase TrmD family. As to quaternary structure, homodimer.

Its subcellular location is the cytoplasm. It catalyses the reaction guanosine(37) in tRNA + S-adenosyl-L-methionine = N(1)-methylguanosine(37) in tRNA + S-adenosyl-L-homocysteine + H(+). In terms of biological role, specifically methylates guanosine-37 in various tRNAs. The protein is tRNA (guanine-N(1)-)-methyltransferase of Shewanella sp. (strain W3-18-1).